The sequence spans 412 residues: MEHFLKKAKASASELLRIDGAKKKSVLLQIADDIEKNSNKILAANEKDMALAREMNLSSALIDRLFLDEKRVRSMAESVREIAMLKDPVGRVLDGWVLDNGLRIEKVSIPIGVIGIIYESRPNVTSDAAALCFKSGNVSILKGGKEAKNSNEAIAETIQAVLEKNDLPKELVSLLPDYSREGVEKLIKMDKYVDLIIPRGGEGLIRYVSENATVPVVKHDKGLCHTYIDKDADFDKAVAIAVNAKVQRPGVCNAMETLLVDYAIKDEILLKLYEAFKPHMTTLKGCALTKEVLPDIETASEEDFHTEYLENILSIKVVDGVEEAIEHIRKYGSGHSEAIVTENYTTAEKFMNEVDAACVYVNASTRFTDGGVFGFGAEVGISTNKLHARGPMGINDLTTYKYKIYGEGQIRQ.

The protein belongs to the gamma-glutamyl phosphate reductase family.

It is found in the cytoplasm. It carries out the reaction L-glutamate 5-semialdehyde + phosphate + NADP(+) = L-glutamyl 5-phosphate + NADPH + H(+). It participates in amino-acid biosynthesis; L-proline biosynthesis; L-glutamate 5-semialdehyde from L-glutamate: step 2/2. Its function is as follows. Catalyzes the NADPH-dependent reduction of L-glutamate 5-phosphate into L-glutamate 5-semialdehyde and phosphate. The product spontaneously undergoes cyclization to form 1-pyrroline-5-carboxylate. The polypeptide is Gamma-glutamyl phosphate reductase (Nitratiruptor sp. (strain SB155-2)).